Consider the following 200-residue polypeptide: CASP-like protein 1U2 (200 aa).

At 1-33 (MAEPVIVVPRKGVYSDDSYHHHHRHHSFHSCTN) the chain is on the cytoplasmic side. Residues 34–54 (FLLRTLTAGATAAAVVVMLIS) form a helical membrane-spanning segment. Residues 55–77 (TQTSGTIYGYFRGRWRDYPAYKW) lie on the Extracellular side of the membrane. A helical transmembrane segment spans residues 78–98 (LIIANAVVFVYSVMAAIVACF). Over 99 to 120 (SVIARRGPLSYSPSAWLTLLVD) the chain is Cytoplasmic. The chain crosses the membrane as a helical span at residues 121 to 141 (FLAASALISAASAALAVALLA). At 142 to 168 (RNGQDLQGTHYWPTVCNYVSKFCDYTQ) the chain is on the extracellular side. A helical membrane pass occupies residues 169–189 (GAIIASFVGFGLLFLSTLLAA). Over 190–200 (SALYHLSHRRH) the chain is Cytoplasmic.

It belongs to the Casparian strip membrane proteins (CASP) family. Homodimer and heterodimers.

The protein localises to the cell membrane. This Physcomitrium patens (Spreading-leaved earth moss) protein is CASP-like protein 1U2.